Consider the following 190-residue polypeptide: Putative glutathione-dependent formaldehyde-activating enzyme (190 aa).

A CENP-V/GFA domain is found at 19–165; the sequence is FKGGKLYCHC…FRKVGLQPYD (147 aa). Positions 26, 28, 47, 49, 52, 94, and 97 each coordinate Zn(2+).

The protein belongs to the Gfa family. Zn(2+) serves as cofactor.

It catalyses the reaction S-(hydroxymethyl)glutathione = glutathione + formaldehyde. It functions in the pathway one-carbon metabolism; formaldehyde degradation; formate from formaldehyde (glutathione route): step 1/3. Catalyzes the condensation of formaldehyde and glutathione to S-hydroxymethylglutathione. The chain is Putative glutathione-dependent formaldehyde-activating enzyme from Pyrenophora teres f. teres (strain 0-1) (Barley net blotch fungus).